A 474-amino-acid polypeptide reads, in one-letter code: Glutamate--tRNA ligase (474 aa).

Residues 11-21 carry the 'HIGH' region motif; it reads PSPTGFLHIGG. A 'KMSKS' region motif is present at residues 240 to 244; that stretch reads KLSKR. Lys-243 lines the ATP pocket.

This sequence belongs to the class-I aminoacyl-tRNA synthetase family. Glutamate--tRNA ligase type 1 subfamily. As to quaternary structure, monomer.

It localises to the cytoplasm. It carries out the reaction tRNA(Glu) + L-glutamate + ATP = L-glutamyl-tRNA(Glu) + AMP + diphosphate. Its function is as follows. Catalyzes the attachment of glutamate to tRNA(Glu) in a two-step reaction: glutamate is first activated by ATP to form Glu-AMP and then transferred to the acceptor end of tRNA(Glu). The sequence is that of Glutamate--tRNA ligase from Nitrobacter winogradskyi (strain ATCC 25391 / DSM 10237 / CIP 104748 / NCIMB 11846 / Nb-255).